The following is a 233-amino-acid chain: tRNA (guanine-N(7)-)-methyltransferase (233 aa).

The interval 1 to 23 is disordered; sequence MSPQDRPSRTTEAFFGRRRGKPV. S-adenosyl-L-methionine contacts are provided by glutamate 64, glutamate 89, aspartate 116, and aspartate 138. The active site involves aspartate 138. Residues lysine 142, aspartate 174, and 212–215 contribute to the substrate site; that span reads TRYE.

This sequence belongs to the class I-like SAM-binding methyltransferase superfamily. TrmB family.

The catalysed reaction is guanosine(46) in tRNA + S-adenosyl-L-methionine = N(7)-methylguanosine(46) in tRNA + S-adenosyl-L-homocysteine. It participates in tRNA modification; N(7)-methylguanine-tRNA biosynthesis. Functionally, catalyzes the formation of N(7)-methylguanine at position 46 (m7G46) in tRNA. The sequence is that of tRNA (guanine-N(7)-)-methyltransferase from Mesorhizobium japonicum (strain LMG 29417 / CECT 9101 / MAFF 303099) (Mesorhizobium loti (strain MAFF 303099)).